The primary structure comprises 147 residues: D-aminoacyl-tRNA deacylase (147 aa).

Positions 136–137 match the Gly-cisPro motif, important for rejection of L-amino acids motif; sequence GP.

Belongs to the DTD family. As to quaternary structure, homodimer.

Its subcellular location is the cytoplasm. The catalysed reaction is glycyl-tRNA(Ala) + H2O = tRNA(Ala) + glycine + H(+). It catalyses the reaction a D-aminoacyl-tRNA + H2O = a tRNA + a D-alpha-amino acid + H(+). An aminoacyl-tRNA editing enzyme that deacylates mischarged D-aminoacyl-tRNAs. Also deacylates mischarged glycyl-tRNA(Ala), protecting cells against glycine mischarging by AlaRS. Acts via tRNA-based rather than protein-based catalysis; rejects L-amino acids rather than detecting D-amino acids in the active site. By recycling D-aminoacyl-tRNA to D-amino acids and free tRNA molecules, this enzyme counteracts the toxicity associated with the formation of D-aminoacyl-tRNA entities in vivo and helps enforce protein L-homochirality. The protein is D-aminoacyl-tRNA deacylase of Nitratiruptor sp. (strain SB155-2).